A 446-amino-acid chain; its full sequence is D(3) dopamine receptor (446 aa).

Residues Met1–Tyr32 lie on the Extracellular side of the membrane. N-linked (GlcNAc...) asparagine glycans are attached at residues Asn12 and Asn19. A helical membrane pass occupies residues Ala33–Leu55. Residues Arg56 to Asn65 lie on the Cytoplasmic side of the membrane. The helical transmembrane segment at Tyr66–Tyr88 threads the bilayer. At Leu89–Asp104 the chain is on the extracellular side. Residue Asn97 is glycosylated (N-linked (GlcNAc...) asparagine). A disulfide bridge connects residues Cys103 and Cys181. A helical membrane pass occupies residues Val105 to Ile126. Topologically, residues Asp127–Arg149 are cytoplasmic. A helical transmembrane segment spans residues Val150–Phe170. Topologically, residues Gly171–Asp187 are extracellular. An N-linked (GlcNAc...) asparagine glycan is attached at Asn173. A helical membrane pass occupies residues Phe188–Ala209. The Cytoplasmic portion of the chain corresponds to Arg210–Gln375. A helical transmembrane segment spans residues Met376–Leu397. The Extracellular segment spans residues Asn398 to Arg412. The cysteines at positions 401 and 404 are disulfide-linked. Residues Ala413 to Phe432 traverse the membrane as a helical segment. The Cytoplasmic portion of the chain corresponds to Asn433 to Cys446.

Belongs to the G-protein coupled receptor 1 family. In terms of assembly, interacts with CLIC6. Interacts with GRK4. Interacts with PALM. Interacts with FLNA (via filamin repeat 21); increases PKA-mediated phosphorylation of FLNA. In terms of processing, phosphorylated by GRK4. Post-translationally, palmitoylated.

It localises to the cell membrane. In terms of biological role, dopamine receptor whose activity is mediated by G proteins which inhibit adenylyl cyclase. Promotes cell proliferation. The sequence is that of D(3) dopamine receptor (Drd3) from Mus musculus (Mouse).